Reading from the N-terminus, the 539-residue chain is Glycine betaine transporter 2 (539 aa).

A run of 12 helical transmembrane segments spans residues 44–64, 85–105, 129–149, 175–195, 231–251, 265–285, 299–319, 348–368, 380–400, 426–446, 480–500, and 503–523; these read LTNPVFWLSGSFLSLFVLLAL, FGAYWQVLLLLNFLIGLALAF, IVLCTLLAGGGVFWAAAEPIA, FMHWGFLAWAILGCLSSIVLM, CSIIAVAAGTIGPIGFLGLQI, FITQSMVIVAAIVMYTLSALS, IILSVLLIGYILFFGPTSFII, WWTVFFWGWFIGYGPMMAIFI, LILSISIAAPLITCFWFSIVG, VLLAITGELPFPMIISVLFLI, FWGLMMGVVAIALISMGSGGI, and LQSFIVITAVPVSFILLPSIL.

It belongs to the BCCT transporter (TC 2.A.15) family.

It localises to the cell inner membrane. Its function is as follows. Involved in the uptake of the osmoprotectant glycine betaine. This is Glycine betaine transporter 2 from Vibrio parahaemolyticus serotype O3:K6 (strain RIMD 2210633).